Here is a 254-residue protein sequence, read N- to C-terminus: tRNA threonylcarbamoyladenosine dehydratase (254 aa).

The protein belongs to the HesA/MoeB/ThiF family.

Catalyzes the ATP-dependent dehydration of threonylcarbamoyladenosine at position 37 (t(6)A37) to form cyclic t(6)A37 (ct(6)A37) in tRNAs that read codons beginning with adenine. The chain is tRNA threonylcarbamoyladenosine dehydratase (tcdA) from Bacillus subtilis (strain 168).